The chain runs to 109 residues: Membrane-bound lysozyme inhibitor of C-type lysozyme (109 aa).

A signal peptide spans 1 to 17 (MTMKKLLIIILPVLLSG). The N-palmitoyl cysteine moiety is linked to residue Cys18. Residue Cys18 is the site of S-diacylglycerol cysteine attachment. Cys37 and Cys102 are oxidised to a cystine.

Belongs to the MliC family. Type 1 subfamily. In terms of assembly, monomer.

The protein localises to the cell outer membrane. Specifically inhibits C-type lysozymes. The chain is Membrane-bound lysozyme inhibitor of C-type lysozyme from Escherichia coli (strain K12).